A 152-amino-acid polypeptide reads, in one-letter code: MAKGVAVLNSSEGVKGTIFFTHEGNGATTVTGTVSGLRPGLHGFHVHALGDNTNGCMSTGPHFNPDGKTHGAPEDANRHAGDLGNIIVGDDGTATFTITDSQIPLSGPNSIVGRAIVVHADPDDLGKGGHELSLSTGNAGGRVACGIIGLQG.

Cu cation is bound by residues His45, His47, and His62. Cys56 and Cys145 are disulfide-bonded. Zn(2+) contacts are provided by His62, His70, His79, and Asp82. His119 provides a ligand contact to Cu cation.

It belongs to the Cu-Zn superoxide dismutase family. In terms of assembly, homodimer. It depends on Cu cation as a cofactor. Requires Zn(2+) as cofactor.

It is found in the cytoplasm. The catalysed reaction is 2 superoxide + 2 H(+) = H2O2 + O2. Functionally, destroys radicals which are normally produced within the cells and which are toxic to biological systems. In Brassica oleracea var. capitata (Cabbage), this protein is Superoxide dismutase [Cu-Zn] (SODCC).